The primary structure comprises 976 residues: MEKQKPFALFVPPRSSSSQVSAVKPQTLGGDSTFFKSFNKCTEDDFEFPFAKTNLSKNGENIDSDPALQKVNFLPVLEQVGNSDCHYQEGLKDSDLENSEGLSRVYSKLYKEAEKIKKWKVSTEAELRQKESKLQENRKIIEAQRKAIQELQFGNEKVSLKLEEGIQENKDLIKENNATRHLCNLLKETCARSAEKTKKYEYEREETRQVYMDLNNNIEKMITAFEELRVQAENSRLEMHFKLKEDYEKIQHLEQEYKKEINDKEKQVSLLLIQITEKENKMKDLTFLLEESRDKVNQLEEKTKLQSENLKQSIEKQHHLTKELEDIKVSLQRSVSTQKALEEDLQIATKTICQLTEEKETQMEESNKARAAHSFVVTEFETTVCSLEELLRTEQQRLEKNEDQLKILTMELQKKSSELEEMTKLTNNKEVELEELKKVLGEKETLLYENKQFEKIAEELKGTEQELIGLLQAREKEVHDLEIQLTAITTSEQYYSKEVKDLKTELENEKLKNTELTSHCNKLSLENKELTQETSDMTLELKNQQEDINNNKKQEERMLKQIENLQETETQLRNELEYVREELKQKRDEVKCKLDKSEENCNNLRKQVENKNKYIEELQQENKALKKKGTAESKQLNVYEIKVNKLELELESAKQKFGEITDTYQKEIEDKKISEENLLEEVEKAKVIADEAVKLQKEIDKRCQHKIAEMVALMEKHKHQYDKIIEERDSELGLYKSKEQEQSSLRASLEIELSNLKAELLSVKKQLEIEREEKEKLKREAKENTATLKEKKDKKTQTFLLETPEIYWKLDSKAVPSQTVSRNFTSVDHGISKDKRDYLWTSAKNTLSTPLPKAYTVKTPTKPKLQQRENLNIPIEESKKKRKMAFEFDINSDSSETTDLLSMVSEEETLKTLYRNNNPPASHLCVKTPKKAPSSLTTPGSTLKFGAIRKMREDRWAVIAKMDRKKKLKEAEKLFV.

A Mediates head to head self-assembly of N-terminal ends motif is present at residues 101 to 111 (GLSRVYSKLYK). Positions 117–120 (KKWK) match the Nuclear localization signal motif. An interaction with SYCE3 region spans residues 206–362 (ETRQVYMDLN…CQLTEEKETQ (157 aa)). 4 coiled-coil regions span residues 211-316 (YMDL…SIEK), 391-439 (LRTE…LKKV), 499-685 (VKDL…VEKA), and 739-798 (EQEQ…KTQT). Residues 676 to 770 (ENLLEEVEKA…LSVKKQLEIE (95 aa)) form a required for pH-induced assembly of C-terminal ends into antiparallel tetramers region. A Nuclear localization signal motif is present at residues 679–682 (LEEV). Positions 784–976 (NTATLKEKKD…KLKEAEKLFV (193 aa)) are DNA-binding. The Nuclear localization signal signature appears at 880-883 (KKRK).

As to quaternary structure, structural component of synaptonemal complexes. Homotetramer that consists of an N-terminal four-helical bundle that bifurcates into two elongated C-terminal dimeric coiled coils. This tetrameric building block potentially self-assembles into a supramolecular zipper-like lattice to mediate meiotic chromosome synapsis. Self-assembly is likely initiated by local proton density at chromosome axis, which is predicted to trigger antiparallel back to back assembly of adjacent C-terminal ends into tetrameric structures that anchor to chromosomal DNA. Then the N-terminal ends are predicted to undergo cooperative antiparallel head to head assembly at the midline of synaptonemal complexes central element to form a zipper-like lattice between properly aligned homologous chromosomes. The nascent synapsis generated by SYCP1 is stabilized through interaction with central element proteins SYCE1 and SYCE2. Interacts (via tetrameric core) with SYCE3; the interaction remodels SYCP1 homotetramers to 2:1 heterotrimers with SYCE3. SYCP1/SYCE3 heterotrimers form lattice assemblies as part of the mature synaptonemal complex via both lateral and head-to-head interactions. Forms a complex with EWSR1, PRDM9, SYCP3 and REC8; complex formation is dependent of phosphorylated form of REC8 and requires PRDM9 bound to hotspot DNA; EWSR1 joins PRDM9 with the chromosomal axis through REC8. Interacts with SPO16. In terms of tissue distribution, testis.

It localises to the nucleus. The protein localises to the chromosome. It is found in the centromere. Major component of the transverse filaments of synaptonemal complexes, formed between homologous chromosomes during meiotic prophase. Required for normal assembly of the central element of the synaptonemal complexes. Required for normal centromere pairing during meiosis. Required for normal meiotic chromosome synapsis during oocyte and spermatocyte development and for normal male and female fertility. The sequence is that of Synaptonemal complex protein 1 from Homo sapiens (Human).